Here is a 227-residue protein sequence, read N- to C-terminus: tRNA (guanine-N(1)-)-methyltransferase (227 aa).

S-adenosyl-L-methionine-binding positions include glycine 111 and 135–140; that span reads LGDYVL.

It belongs to the RNA methyltransferase TrmD family. Homodimer.

Its subcellular location is the cytoplasm. The enzyme catalyses guanosine(37) in tRNA + S-adenosyl-L-methionine = N(1)-methylguanosine(37) in tRNA + S-adenosyl-L-homocysteine + H(+). Functionally, specifically methylates guanosine-37 in various tRNAs. The chain is tRNA (guanine-N(1)-)-methyltransferase from Leifsonia xyli subsp. xyli (strain CTCB07).